The sequence spans 189 residues: Crossover junction endodeoxyribonuclease RuvC (189 aa).

Active-site residues include aspartate 11, glutamate 71, and aspartate 143. Mg(2+)-binding residues include aspartate 11, glutamate 71, and aspartate 143.

This sequence belongs to the RuvC family. As to quaternary structure, homodimer which binds Holliday junction (HJ) DNA. The HJ becomes 2-fold symmetrical on binding to RuvC with unstacked arms; it has a different conformation from HJ DNA in complex with RuvA. In the full resolvosome a probable DNA-RuvA(4)-RuvB(12)-RuvC(2) complex forms which resolves the HJ. Mg(2+) is required as a cofactor.

It localises to the cytoplasm. It carries out the reaction Endonucleolytic cleavage at a junction such as a reciprocal single-stranded crossover between two homologous DNA duplexes (Holliday junction).. The RuvA-RuvB-RuvC complex processes Holliday junction (HJ) DNA during genetic recombination and DNA repair. Endonuclease that resolves HJ intermediates. Cleaves cruciform DNA by making single-stranded nicks across the HJ at symmetrical positions within the homologous arms, yielding a 5'-phosphate and a 3'-hydroxyl group; requires a central core of homology in the junction. The consensus cleavage sequence is 5'-(A/T)TT(C/G)-3'. Cleavage occurs on the 3'-side of the TT dinucleotide at the point of strand exchange. HJ branch migration catalyzed by RuvA-RuvB allows RuvC to scan DNA until it finds its consensus sequence, where it cleaves and resolves the cruciform DNA. The chain is Crossover junction endodeoxyribonuclease RuvC from Methylorubrum populi (strain ATCC BAA-705 / NCIMB 13946 / BJ001) (Methylobacterium populi).